Consider the following 107-residue polypeptide: Integration host factor subunit beta (107 aa).

Residues 82-101 (PGKELRERVDRRAGEPLKAE) are compositionally biased toward basic and acidic residues. The tract at residues 82-107 (PGKELRERVDRRAGEPLKAEDPDDDL) is disordered.

Belongs to the bacterial histone-like protein family. In terms of assembly, heterodimer of an alpha and a beta chain.

Its function is as follows. This protein is one of the two subunits of integration host factor, a specific DNA-binding protein that functions in genetic recombination as well as in transcriptional and translational control. In Paraburkholderia xenovorans (strain LB400), this protein is Integration host factor subunit beta.